The following is a 652-amino-acid chain: MAVDDYEELLKYYELHETIGTGGFAKVKLASHLTTGEKVAIKIMDKESLGDDLPRVKTEIDAMKNLSHQHVCRLYHVIETPNKIFMVLEYCPGGELFDYIIAKDRLTEDEARVFFRQIVSAVAYIHSQGYAHRDLKPENLLIDEDQNLKLIDFGLCAKPKGGLDYHLMTCCGSPAYAAPELIQGKAYIGSEADIWSMGVLMYALMCGYLPFDDDNVMVLYKKIMRGKYEIPKWLSPGSVLLLSQMLQVDPKKRISVKHLLSHPWLMQGYSCPVEWQSKYPLGYVDEDCVTELSVFYKCSRTSTSRLISEWNYDHITASYLLLHSKKSHGKPVRLKRPLAVGDQPVTSFKELRPKSTLDFEEPNCGEIAYVFGSMEFSDDELFSEDFAYSCFEPHTPKEYVKGRSEFHSVDSAPSTPVVQRYARHKSEDKENCDAALGKDENVFLHPAPWTPTPRRKQNEKKGILTTPNKNSHTKEKNQSKETPTKKPITTGEELANVISPERRCRSVELDLNQAHVDSAQKKKGAKVFGSLERGLDKMITMLTPSKRKGYAREGPRKLRAHYNVTTTNIMNPEQLLNQIVKVLPSKNVDYVQKGYTLKCKTQSDFGKVTMQFELEVCQLSKSEMVGIRRQRLKGDAWVYKRLVEDILSSCKV.

Positions 13 to 265 constitute a Protein kinase domain; it reads YELHETIGTG…VKHLLSHPWL (253 aa). Residues 19-27 and Lys-42 contribute to the ATP site; that span reads IGTGGFAKV. Asp-134 (proton acceptor) is an active-site residue. At Thr-169 the chain carries Phosphothreonine; by autocatalysis. The residue at position 173 (Ser-173) is a Phosphoserine; by autocatalysis. A UBA-like region spans residues 284–323; it reads VDEDCVTELSVFYKCSRTSTSRLISEWNYDHITASYLLLH. The interval 328–652 is autoinhibitory region; that stretch reads HGKPVRLKRP…VEDILSSCKV (325 aa). Thr-415, Thr-450, Thr-452, Thr-482, and Thr-484 each carry phosphothreonine. Positions 443-492 are disordered; it reads FLHPAPWTPTPRRKQNEKKGILTTPNKNSHTKEKNQSKETPTKKPITTGE. Residues 472–484 are compositionally biased toward basic and acidic residues; it reads HTKEKNQSKETPT. Residues Ser-499, Ser-506, and Ser-518 each carry the phosphoserine modification. Residues 603-652 form the KA1 domain; it reads SDFGKVTMQFELEVCQLSKSEMVGIRRQRLKGDAWVYKRLVEDILSSCKV.

It belongs to the protein kinase superfamily. CAMK Ser/Thr protein kinase family. SNF1 subfamily. Post-translationally, autophosphorylated: autophosphorylation of the T-loop at Thr-169 and Ser-173 is required for activation. Phosphorylated by the maturation promoting factor (MPF), composed of cdk1 and a cyclin-B. Also phosphorylated by some MAPK. Phosphorylated during oocyte maturation. Dephosphorylation destabilizes the protein. In terms of processing, degraded when cells exit mitosis.

It is found in the cell membrane. The enzyme catalyses L-seryl-[protein] + ATP = O-phospho-L-seryl-[protein] + ADP + H(+). It catalyses the reaction L-threonyl-[protein] + ATP = O-phospho-L-threonyl-[protein] + ADP + H(+). Its activity is regulated as follows. Activated by autophosphorylation of the T-loop at Thr-169 and Ser-173: in contrast to other members of the SNF1 subfamily, phosphorylation at Thr-169 is not mediated by STK11/LKB1 but via autophosphorylation instead. Serine/threonine-protein kinase involved in various processes such as cell cycle regulation, self-renewal of stem cells, apoptosis and splicing regulation. Also plays a role in primitive hematopoiesis, possibly by affecting the expression of genes critical for hematopoiesis. Plays a role in cytokinesis during early development. This Xenopus tropicalis (Western clawed frog) protein is Maternal embryonic leucine zipper kinase (melk).